A 193-amino-acid polypeptide reads, in one-letter code: Peptidyl-tRNA hydrolase (193 aa).

Tyr-17 contacts tRNA. The active-site Proton acceptor is His-22. TRNA is bound by residues Tyr-68, Asn-70, and Asn-116.

This sequence belongs to the PTH family. As to quaternary structure, monomer.

The protein resides in the cytoplasm. It carries out the reaction an N-acyl-L-alpha-aminoacyl-tRNA + H2O = an N-acyl-L-amino acid + a tRNA + H(+). Its function is as follows. Hydrolyzes ribosome-free peptidyl-tRNAs (with 1 or more amino acids incorporated), which drop off the ribosome during protein synthesis, or as a result of ribosome stalling. In terms of biological role, catalyzes the release of premature peptidyl moieties from peptidyl-tRNA molecules trapped in stalled 50S ribosomal subunits, and thus maintains levels of free tRNAs and 50S ribosomes. This Acinetobacter baumannii (strain AB307-0294) protein is Peptidyl-tRNA hydrolase.